The chain runs to 54 residues: Large ribosomal subunit protein bL33 (54 aa).

Belongs to the bacterial ribosomal protein bL33 family.

The chain is Large ribosomal subunit protein bL33 from Corynebacterium glutamicum (strain R).